We begin with the raw amino-acid sequence, 400 residues long: tRNA-specific adenosine deaminase 1 (400 aa).

Residues 76 to 400 enclose the A to I editase domain; that stretch reads SIATGVKALP…WIPTRTDDVK (325 aa). H101 is a Zn(2+) binding site. The active-site Proton donor is the E103. A 1D-myo-inositol hexakisphosphate-binding site is contributed by R108. Zn(2+) contacts are provided by C157 and C223. The 1D-myo-inositol hexakisphosphate site is built by K226, R232, K369, and R375.

The protein belongs to the ADAT1 family. It depends on 1D-myo-inositol hexakisphosphate as a cofactor. Requires Zn(2+) as cofactor.

It carries out the reaction adenosine(37) in tRNA(Ala) + H2O + H(+) = inosine(37) in tRNA(Ala) + NH4(+). Deaminates adenosine-37 to inosine in tRNA-Ala. The polypeptide is tRNA-specific adenosine deaminase 1 (TAD1) (Saccharomyces cerevisiae (strain ATCC 204508 / S288c) (Baker's yeast)).